A 363-amino-acid chain; its full sequence is Ribosome-binding ATPase YchF (363 aa).

The region spanning 3 to 256 (FKCGIVGLPN…LEDEEKVDFL (254 aa)) is the OBG-type G domain. 12–17 (NVGKST) provides a ligand contact to ATP. Positions 16 and 36 each coordinate Mg(2+). One can recognise a TGS domain in the interval 278–361 (NLQTYFTAGV…QDGDVMHFRF (84 aa)).

The protein belongs to the TRAFAC class OBG-HflX-like GTPase superfamily. OBG GTPase family. YchF/OLA1 subfamily. It depends on Mg(2+) as a cofactor.

Functionally, ATPase that binds to both the 70S ribosome and the 50S ribosomal subunit in a nucleotide-independent manner. The polypeptide is Ribosome-binding ATPase YchF (Haemophilus ducreyi (strain 35000HP / ATCC 700724)).